A 145-amino-acid polypeptide reads, in one-letter code: Holo-[acyl-carrier-protein] synthase (145 aa).

Positions 9 and 63 each coordinate Mg(2+).

This sequence belongs to the P-Pant transferase superfamily. AcpS family. It depends on Mg(2+) as a cofactor.

It is found in the cytoplasm. It catalyses the reaction apo-[ACP] + CoA = holo-[ACP] + adenosine 3',5'-bisphosphate + H(+). Transfers the 4'-phosphopantetheine moiety from coenzyme A to a Ser of acyl-carrier-protein. This chain is Holo-[acyl-carrier-protein] synthase, found in Burkholderia vietnamiensis (strain G4 / LMG 22486) (Burkholderia cepacia (strain R1808)).